The sequence spans 251 residues: Imidazole glycerol phosphate synthase subunit HisF (251 aa).

Residues D13 and D132 contribute to the active site.

The protein belongs to the HisA/HisF family. In terms of assembly, heterodimer of HisH and HisF.

It localises to the cytoplasm. The enzyme catalyses 5-[(5-phospho-1-deoxy-D-ribulos-1-ylimino)methylamino]-1-(5-phospho-beta-D-ribosyl)imidazole-4-carboxamide + L-glutamine = D-erythro-1-(imidazol-4-yl)glycerol 3-phosphate + 5-amino-1-(5-phospho-beta-D-ribosyl)imidazole-4-carboxamide + L-glutamate + H(+). It functions in the pathway amino-acid biosynthesis; L-histidine biosynthesis; L-histidine from 5-phospho-alpha-D-ribose 1-diphosphate: step 5/9. In terms of biological role, IGPS catalyzes the conversion of PRFAR and glutamine to IGP, AICAR and glutamate. The HisF subunit catalyzes the cyclization activity that produces IGP and AICAR from PRFAR using the ammonia provided by the HisH subunit. The polypeptide is Imidazole glycerol phosphate synthase subunit HisF (Campylobacter concisus (strain 13826)).